Reading from the N-terminus, the 195-residue chain is CASP-like protein 2C2 (195 aa).

Over 1–18 (MAATTAAAAVPGVVRAER) the chain is Cytoplasmic. The chain crosses the membrane as a helical span at residues 19–39 (LLRGGCVVMAATAALLLGFSA). The Extracellular segment spans residues 40–57 (ETKTVLFVRKTAVAKDVQ). Residues 58-78 (ALWVLTVAAAAAAGYQFAQLV) form a helical membrane-spanning segment. At 79–106 (RCMYCSSSGDAGAMAVAWTSFLLDKGCA) the chain is on the cytoplasmic side. The chain crosses the membrane as a helical span at residues 107 to 127 (YVVFASTAAALQACMVGLIGV). Topologically, residues 128–145 (EALQWSKLCNIYTRFCEQ) are extracellular. The helical transmembrane segment at 146 to 166 (AAAGMLCSFLAAAGMAVLSAF) threads the bilayer. Residues 167–195 (SARRLFRLYSPAGHRRSCPRAAVLATSPH) are Cytoplasmic-facing.

It belongs to the Casparian strip membrane proteins (CASP) family. As to quaternary structure, homodimer and heterodimers.

It localises to the cell membrane. This is CASP-like protein 2C2 from Oryza sativa subsp. japonica (Rice).